Here is a 120-residue protein sequence, read N- to C-terminus: Histone H2B (120 aa).

Positions 1 to 26 (MAEPAKKKPKKLPKKDKGQKDIKRKK) are disordered. The residue at position 2 (Ala2) is a Blocked amino end (Ala). 3 positions are modified to N6-acetyllysine: Lys7, Lys10, and Lys11. Lys115 is covalently cross-linked (Glycyl lysine isopeptide (Lys-Gly) (interchain with G-Cter in ubiquitin)).

It belongs to the histone H2B family. In terms of assembly, the nucleosome is a histone octamer containing two molecules each of H2A, H2B, H3 and H4 assembled in one H3-H4 heterotetramer and two H2A-H2B heterodimers. The octamer wraps approximately 147 bp of DNA. Post-translationally, can be acetylated to form H2BK6ac, H2BK33ac and H2BK34ac. Monoubiquitinated to form H2BK143ub1; may give a specific tag for epigenetic transcriptional activation.

The protein localises to the nucleus. It is found in the chromosome. In terms of biological role, core component of nucleosome. Nucleosomes wrap and compact DNA into chromatin, limiting DNA accessibility to the cellular machineries which require DNA as a template. Histones thereby play a central role in transcription regulation, DNA repair, DNA replication and chromosomal stability. DNA accessibility is regulated via a complex set of post-translational modifications of histones, also called histone code, and nucleosome remodeling. The protein is Histone H2B of Pisum sativum (Garden pea).